A 713-amino-acid polypeptide reads, in one-letter code: Segment polarity protein dishevelled homolog DVL-3 (713 aa).

The 82-residue stretch at 1–82 (MGETKVIYHL…RVVCWLVSAD (82 aa)) folds into the DIX domain. 2 stretches are compositionally biased toward polar residues: residues 87-98 (DAGSVCADNQSD) and 118-127 (HPNTRGSQEN). The segment at 87–235 (DAGSVCADNQ…PRIERSSSFS (149 aa)) is disordered. The segment covering 140-155 (AHRERPRRKETPEHAT) has biased composition (basic and acidic residues). The segment covering 173–189 (ESSSTLMSSELDSTSFF) has biased composition (low complexity). The segment covering 199-210 (RFSNSTEQSSAS) has biased composition (polar residues). The segment covering 212–225 (LMRRHKRRRRKPKA) has biased composition (basic residues). Residues 248–333 (TVTLNMEKYN…KPGPITLTVA (86 aa)) enclose the PDZ domain. In terms of domain architecture, DEP spans 421–495 (PESGLEVRDR…SEQCYYIFGD (75 aa)). Positions 508–518 (HDGSSGTSDQD) are enriched in polar residues. Disordered regions lie at residues 508–527 (HDGSSGTSDQDTLAPLPHPG) and 545–652 (YSPH…GPPG). Residues 564–579 (GSQHSEGSRSSGSNRS) show a composition bias toward low complexity. Composition is skewed to basic and acidic residues over residues 580–593 (STEKRKEREAKGGD) and 602–618 (ESDHTTRSSVRRERAAS). Positions 629 to 646 (HRSHHSIAHSIRSHHTHH) are enriched in basic residues.

Belongs to the DSH family.

The protein localises to the cytoplasm. Functionally, involved in the signal transduction pathway mediated by multiple Wnt genes. Required during ciliogenesis for the docking of basal bodies to the apical plasma membrane. The polypeptide is Segment polarity protein dishevelled homolog DVL-3 (Xenopus tropicalis (Western clawed frog)).